Here is a 421-residue protein sequence, read N- to C-terminus: Zinc chaperone AztD (421 aa).

The N-terminal stretch at 1-29 (MMENIMKKRLLSTSISTLLLGLSVMPAFA) is a signal peptide. Zn(2+)-binding residues include histidine 101, histidine 104, aspartate 106, histidine 126, histidine 169, histidine 216, and histidine 405. A disulfide bridge links cysteine 212 with cysteine 229. Residues 399-421 (GGSGKVHGEHHDHEAHHHDDHAH) are disordered. Basic and acidic residues predominate over residues 404–421 (VHGEHHDHEAHHHDDHAH). An N-terminal Zn(2+)-binding motif; binds a third Zn(2+) with low affinity motif is present at residues 408–419 (HHDHEAHHHDDH).

Monomer.

The protein resides in the periplasm. In terms of biological role, acts as a zinc chaperone in the AztABCD zinc transport system. Directly transfers one zinc cation to the solute binding protein AztC; the transfer occurs without the formation of a stable interaction. Binds 3 Zn(2+), two with high affinity and one with low affinity, and transfers only Zn(2+) bound to site 2 to AztC. This is Zinc chaperone AztD from Citrobacter koseri (strain ATCC BAA-895 / CDC 4225-83 / SGSC4696).